A 356-amino-acid polypeptide reads, in one-letter code: tRNA N6-adenosine threonylcarbamoyltransferase (356 aa).

Residues histidine 115 and histidine 119 each coordinate Fe cation. Substrate is bound by residues 139 to 143, aspartate 173, glycine 186, aspartate 190, and asparagine 291; that span reads LVSGG. Residue aspartate 319 coordinates Fe cation.

The protein belongs to the KAE1 / TsaD family. It depends on Fe(2+) as a cofactor.

It is found in the cytoplasm. It carries out the reaction L-threonylcarbamoyladenylate + adenosine(37) in tRNA = N(6)-L-threonylcarbamoyladenosine(37) in tRNA + AMP + H(+). Functionally, required for the formation of a threonylcarbamoyl group on adenosine at position 37 (t(6)A37) in tRNAs that read codons beginning with adenine. Is involved in the transfer of the threonylcarbamoyl moiety of threonylcarbamoyl-AMP (TC-AMP) to the N6 group of A37, together with TsaE and TsaB. TsaD likely plays a direct catalytic role in this reaction. The protein is tRNA N6-adenosine threonylcarbamoyltransferase of Arthrobacter sp. (strain FB24).